The chain runs to 298 residues: Acetylglutamate kinase (298 aa).

Substrate contacts are provided by residues Gly-69–Gly-70, Arg-91, and Asn-196.

This sequence belongs to the acetylglutamate kinase family. ArgB subfamily.

Its subcellular location is the cytoplasm. It catalyses the reaction N-acetyl-L-glutamate + ATP = N-acetyl-L-glutamyl 5-phosphate + ADP. The protein operates within amino-acid biosynthesis; L-arginine biosynthesis; N(2)-acetyl-L-ornithine from L-glutamate: step 2/4. In terms of biological role, catalyzes the ATP-dependent phosphorylation of N-acetyl-L-glutamate. The chain is Acetylglutamate kinase from Bradyrhizobium sp. (strain ORS 278).